Here is a 147-residue protein sequence, read N- to C-terminus: Transcriptional regulator MraZ (147 aa).

SpoVT-AbrB domains follow at residues 5–52 (NHPT…PMEE) and 81–124 (GQVV…NAEH).

This sequence belongs to the MraZ family. As to quaternary structure, forms oligomers.

It is found in the cytoplasm. It localises to the nucleoid. This chain is Transcriptional regulator MraZ, found in Koribacter versatilis (strain Ellin345).